Here is an 818-residue protein sequence, read N- to C-terminus: ATM interactor (818 aa).

The segment covering 1–34 (MAATEAAAADSAGPAPGVPATPASTRGAAAASSP) has biased composition (low complexity). The tract at residues 1–62 (MAATEAAAAD…RAAAPVPPAR (62 aa)) is disordered. A C2H2-type 1 zinc finger spans residues 80-105 (ILCTVRGCGKILPNSPALNMHLVKSH). The segment at 161-181 (HKCSKCSNSYGTEWDLKRHEE) adopts a C2H2-type 2; degenerate zinc-finger fold. Over residues 210-221 (HEIPAEHRDPPS) the composition is skewed to basic and acidic residues. Disordered stretches follow at residues 210 to 284 (HEIP…ATPP) and 603 to 625 (DNRS…GSAQ). Residues 219–437 (PPSKKRKMES…PDSSVSSCSQ (219 aa)) are required for formation of RAD51 foci. 2 stretches are compositionally biased toward polar residues: residues 229–243 (YLQN…TEPL) and 603–612 (DNRSLLSDTN).

In terms of assembly, interacts via its C-terminus with ATM. Interacts with DYNLL; this interaction inhibits ATMIN transcriptional activity and hence may play a role in a feedback loop whereby DYNLL1 inhibits transactivation of its own promoter by ATMIN. ATMIN.

The protein localises to the nucleus. Its function is as follows. Transcription factor. Plays a crucial role in cell survival and RAD51 foci formation in response to methylating DNA damage. Involved in regulating the activity of ATM in the absence of DNA damage. May play a role in stabilizing ATM. Binds to the DYNLL1 promoter and activates its transcription. In Mus musculus (Mouse), this protein is ATM interactor.